The primary structure comprises 253 residues: MRILLSNDDGYLAPGLAALYEALRPLAEILVMAPEQNCSGASNSLTLSRPLSVSRSAATGFYYVNGTPTDSVHVALTGMLDTKPDLVVSGINNGQNMGDDTLYSGTVAAATEGIMFGVPAIAFSLVHKEWAHLGDAARVAAEIVRHYLDHPLPGQPLLNINIPNLPYEELKGWRVTRLGKRHPSQPVIRQTNPRGEPIYWIGAAGDALDASEGTDFHATASGYVSITPLQLDLTHTQMLAATRDWARAGSGAS.

A divalent metal cation is bound by residues aspartate 8, aspartate 9, serine 39, and asparagine 92.

Belongs to the SurE nucleotidase family. Requires a divalent metal cation as cofactor.

It is found in the cytoplasm. The enzyme catalyses a ribonucleoside 5'-phosphate + H2O = a ribonucleoside + phosphate. Functionally, nucleotidase that shows phosphatase activity on nucleoside 5'-monophosphates. This is 5'-nucleotidase SurE from Burkholderia pseudomallei (strain 1710b).